The following is a 366-amino-acid chain: Chalcone synthase B (366 aa).

Cys-172 is a catalytic residue.

The protein belongs to the thiolase-like superfamily. Chalcone/stilbene synthases family.

It catalyses the reaction (E)-4-coumaroyl-CoA + 3 malonyl-CoA + 3 H(+) = 2',4,4',6'-tetrahydroxychalcone + 3 CO2 + 4 CoA. It participates in secondary metabolite biosynthesis; flavonoid biosynthesis. Functionally, the primary product of this enzyme is 4,2',4',6'-tetrahydroxychalcone (also termed naringenin-chalcone or chalcone) which can under specific conditions spontaneously isomerize into naringenin. The polypeptide is Chalcone synthase B (CHSB) (Ipomoea trifida (Morning glory)).